The chain runs to 95 residues: Large ribosomal subunit protein bL25 (95 aa).

It belongs to the bacterial ribosomal protein bL25 family. As to quaternary structure, part of the 50S ribosomal subunit; part of the 5S rRNA/L5/L18/L25 subcomplex. Contacts the 5S rRNA. Binds to the 5S rRNA independently of L5 and L18.

In terms of biological role, this is one of the proteins that binds to the 5S RNA in the ribosome where it forms part of the central protuberance. The polypeptide is Large ribosomal subunit protein bL25 (Actinobacillus pleuropneumoniae serotype 3 (strain JL03)).